We begin with the raw amino-acid sequence, 429 residues long: Adenylosuccinate synthetase (429 aa).

Residues 13–19 (GDEGKGK) and 41–43 (GHT) contribute to the GTP site. Catalysis depends on D14, which acts as the Proton acceptor. The Mg(2+) site is built by D14 and G41. IMP is bound by residues 14–17 (DEGK), 39–42 (NAGH), T130, R144, Q225, T240, and R304. The active-site Proton donor is the H42. 300 to 306 (ATTGRAR) provides a ligand contact to substrate. Residues R306, 332 to 334 (KLD), and 413 to 415 (STG) contribute to the GTP site.

It belongs to the adenylosuccinate synthetase family. As to quaternary structure, homodimer. It depends on Mg(2+) as a cofactor.

The protein resides in the cytoplasm. The catalysed reaction is IMP + L-aspartate + GTP = N(6)-(1,2-dicarboxyethyl)-AMP + GDP + phosphate + 2 H(+). Its pathway is purine metabolism; AMP biosynthesis via de novo pathway; AMP from IMP: step 1/2. Functionally, plays an important role in the de novo pathway of purine nucleotide biosynthesis. Catalyzes the first committed step in the biosynthesis of AMP from IMP. This Pseudomonas fluorescens (strain SBW25) protein is Adenylosuccinate synthetase.